A 462-amino-acid chain; its full sequence is Gastric inhibitory polypeptide receptor (462 aa).

Positions 1–18 (MPLRPRLLLLCLWGLLLQ) are cleaved as a signal peptide. Residues 19-135 (QAETDSEGQT…DQRLILERLQ (117 aa)) are Extracellular-facing. 3 cysteine pairs are disulfide-bonded: cysteine 43/cysteine 67, cysteine 58/cysteine 100, and cysteine 81/cysteine 115. N-linked (GlcNAc...) asparagine glycans are attached at residues asparagine 59 and asparagine 74. Residues 136-158 (VVYTVGYSLSLGTLLLALLILSL) form a helical membrane-spanning segment. Over 159–166 (FRRLHCTR) the chain is Cytoplasmic. A helical membrane pass occupies residues 167-186 (NYIHMNVFLSFMLRAVAILT). Over 187–214 (RDRLLPTLGPYPGDRTLTLRNQALAACR) the chain is Extracellular. A helical membrane pass occupies residues 215–239 (TAQIVTQYCVGANYTWLLVEGVYLH). Residues 240–251 (HLLVIVGGSEKG) lie on the Cytoplasmic side of the membrane. The chain crosses the membrane as a helical span at residues 252–275 (HFRCYLLLGWGAPALFVIPWVIVR). The Extracellular portion of the chain corresponds to 276–290 (YLLENTQCWERNEVK). The chain crosses the membrane as a helical span at residues 291-316 (AIWWIIRTPILITILINFFIFIRILG). Over 317–338 (ILVSKLRTRQMRCPDYRLRLAR) the chain is Cytoplasmic. The helical transmembrane segment at 339–359 (STLTLVPLLGVHEVVFAPVTE) threads the bilayer. Topologically, residues 360–374 (EQAEGTLRFAKLAFE) are extracellular. A helical membrane pass occupies residues 375 to 395 (IFLSSFQGFLVSVLYCFINKE). The Cytoplasmic portion of the chain corresponds to 396–462 (VQSEIRRSWR…PGEEVLESYC (67 aa)). Residues 421 to 462 (HAELGPQALPSRSAPREVPITGSTLPSGPLHGPGEEVLESYC) form a disordered region.

This sequence belongs to the G-protein coupled receptor 2 family. In terms of assembly, may form homodimers and heterodimers with GLP1R. Post-translationally, N-glycosylation is required for cell surface expression and lengthens receptor half-life by preventing degradation in the ER. In terms of tissue distribution, widely distributed including pancreatic islets, brain and various peripheral tissues.

It localises to the cell membrane. In terms of biological role, this is a receptor for GIP. The activity of this receptor is mediated by G proteins which activate adenylyl cyclase. The protein is Gastric inhibitory polypeptide receptor (GIPR) of Mesocricetus auratus (Golden hamster).